Consider the following 304-residue polypeptide: uncharacterized protein (304 aa).

An N-terminal signal peptide occupies residues 1-22 (MKKSLTLLILLLCSLLFSTVLS). The tract at residues 91–111 (PAPAPTPESSDPDEPMKPDDS) is disordered. N-linked (GlcNAc...) asparagine glycosylation is found at Asn-133, Asn-160, Asn-183, and Asn-233. The GPI-anchor amidated serine moiety is linked to residue Ser-282. A propeptide spans 283–304 (SSHLFGVLPFLPLVLCIFLFLL) (removed in mature form).

The protein localises to the cell membrane. This is an uncharacterized protein from Arabidopsis thaliana (Mouse-ear cress).